Reading from the N-terminus, the 80-residue chain is Lantibiotic Flvalpha.b (80 aa).

Residues Met1–Ala38 constitute a propeptide, cleaved by FlvT. 2,3-didehydrobutyrine; by FlvM1 is present on residues Thr43 and Thr47. Positions Thr52 to Cys55 form a cross-link, beta-methyllanthionine (Thr-Cys); by FlvM1. The lanthionine (Ser-Cys); by FlvM1 cross-link spans Ser58 to Cys68. 2 cross-links (beta-methyllanthionine (Thr-Cys); by FlvM1) span residues Thr69–Cys74 and Thr71–Cys78.

Post-translationally, the lanthionine formed by Ser-58 and Cys-68 forms a putative lipid II binding motif. In terms of processing, maturation of FlvA1 peptides involves the enzymatic conversion of Thr, and Ser into dehydrated AA and the formation of thioether bonds with cysteines. Modifications are processed by the flavecin synthetase FlvM1. This is followed by membrane translocation and cleavage of the modified precursor. Contains DL-lanthionine and DL-beta-methyllanthionine, when coepressed in E.coli with the flavecin synthetase FlvM1.

The protein localises to the secreted. Lanthionine-containing peptide antibiotic (lantibiotic) only active on Gram-positive bacteria in synergy with Flvbeta peptides, which are encoded by the same operon than Flvalpha.a. Shows antibacterial activity in synergy with Flvbeta.b, Flvbeta.c, Flvbeta.e and Flvbeta.g. Does not show antibacterial activity when tested with Flvbeta.a, Flvbeta.d, Flvbeta.f and Flvbeta.h. The bactericidal activity of lantibiotics is based on depolarization of energized bacterial cytoplasmic membranes, initiated by the formation of aqueous transmembrane pores. This chain is Lantibiotic Flvalpha.b, found in Ruminococcus flavefaciens.